The chain runs to 141 residues: Small ribosomal subunit protein bS6 (141 aa).

Residues S110–A141 form a disordered region. Residues Q117–A141 show a composition bias toward low complexity.

Belongs to the bacterial ribosomal protein bS6 family.

Binds together with bS18 to 16S ribosomal RNA. In Acidobacterium capsulatum (strain ATCC 51196 / DSM 11244 / BCRC 80197 / JCM 7670 / NBRC 15755 / NCIMB 13165 / 161), this protein is Small ribosomal subunit protein bS6.